Consider the following 224-residue polypeptide: Cytidylate kinase (224 aa).

11–19 (GPAAAGKST) is an ATP binding site.

This sequence belongs to the cytidylate kinase family. Type 1 subfamily.

It is found in the cytoplasm. The enzyme catalyses CMP + ATP = CDP + ADP. It carries out the reaction dCMP + ATP = dCDP + ADP. The chain is Cytidylate kinase from Bacillus velezensis (strain DSM 23117 / BGSC 10A6 / LMG 26770 / FZB42) (Bacillus amyloliquefaciens subsp. plantarum).